A 175-amino-acid polypeptide reads, in one-letter code: Phytochrome-interacting ankyrin-repeat protein 1 (175 aa).

ANK repeat units follow at residues arginine 30 to alanine 59, lysine 67 to alanine 96, and cysteine 102 to aspartate 131.

In terms of assembly, interacts with phytochrome A (PHYA), both in Pr and Pfr forms.

It is found in the cytoplasm. Its subcellular location is the nucleus. The protein localises to the mitochondrion. The protein is Phytochrome-interacting ankyrin-repeat protein 1 of Arabidopsis thaliana (Mouse-ear cress).